The sequence spans 327 residues: Phenylalanine--tRNA ligase alpha subunit (327 aa).

E252 lines the Mg(2+) pocket.

This sequence belongs to the class-II aminoacyl-tRNA synthetase family. Phe-tRNA synthetase alpha subunit type 1 subfamily. As to quaternary structure, tetramer of two alpha and two beta subunits. Requires Mg(2+) as cofactor.

The protein resides in the cytoplasm. It catalyses the reaction tRNA(Phe) + L-phenylalanine + ATP = L-phenylalanyl-tRNA(Phe) + AMP + diphosphate + H(+). The protein is Phenylalanine--tRNA ligase alpha subunit of Escherichia coli O127:H6 (strain E2348/69 / EPEC).